A 331-amino-acid polypeptide reads, in one-letter code: MKVTVLVGGVGGARFLLGVQHLLGLGQFARDDARDPDAHEVTAVVNVGDDTWMFGVRICPDLDTCMYTLGGGIDPDRGWGHRDETWHAKEELAAYGVQPDWFGLGDRDLATHLVRSQMLRAGYPLSQVTEALCDRWNPGARLLPASDDRSETHVVITDPDTDERRAIHFQEWWVRYRAKVPTHSFAFVGADKATTAPGVTDAIADADVVLLAPSNPVVSIGSILAIPGIRGALRSTSAKIIGYSPIIAGKPLRGMADECLSVIGVASTSEAVGRHYGARSGTGILDGWLVHEGDSAQIDGVEVEAVPLLMTDPATTAEMVRAGVRLAGVTL.

Asp-63 serves as a coordination point for 7,8-didemethyl-8-hydroxy-5-deazariboflavin.

Belongs to the CofD family. Homodimer. The cofactor is Mg(2+).

The catalysed reaction is enolpyruvoyl-2-diphospho-5'-guanosine + 7,8-didemethyl-8-hydroxy-5-deazariboflavin = dehydro coenzyme F420-0 + GMP + H(+). It functions in the pathway cofactor biosynthesis; coenzyme F420 biosynthesis. Functionally, catalyzes the transfer of the phosphoenolpyruvate moiety from enoylpyruvoyl-2-diphospho-5'-guanosine (EPPG) to 7,8-didemethyl-8-hydroxy-5-deazariboflavin (FO) with the formation of dehydro coenzyme F420-0 and GMP. The polypeptide is Phosphoenolpyruvate transferase (Mycobacterium sp. (strain JLS)).